Here is a 245-residue protein sequence, read N- to C-terminus: Demethylmenaquinone methyltransferase (245 aa).

Residues threonine 58, aspartate 79, and 106–107 (NA) contribute to the S-adenosyl-L-methionine site.

Belongs to the class I-like SAM-binding methyltransferase superfamily. MenG/UbiE family.

It catalyses the reaction a 2-demethylmenaquinol + S-adenosyl-L-methionine = a menaquinol + S-adenosyl-L-homocysteine + H(+). It participates in quinol/quinone metabolism; menaquinone biosynthesis; menaquinol from 1,4-dihydroxy-2-naphthoate: step 2/2. In terms of biological role, methyltransferase required for the conversion of demethylmenaquinol (DMKH2) to menaquinol (MKH2). In Halalkalibacterium halodurans (strain ATCC BAA-125 / DSM 18197 / FERM 7344 / JCM 9153 / C-125) (Bacillus halodurans), this protein is Demethylmenaquinone methyltransferase.